The primary structure comprises 349 residues: Protein-glutamate methylesterase/protein-glutamine glutaminase (349 aa).

Residues 5 to 122 (RVLSVDDSAL…REGMLAYSEM (118 aa)) form the Response regulatory domain. Asp56 is subject to 4-aspartylphosphate. Residues 152–344 (LLSSEKLIAI…QQMLAKISAG (193 aa)) form the CheB-type methylesterase domain. Active-site residues include Ser164, His190, and Asp286.

It belongs to the CheB family. Post-translationally, phosphorylated by CheA. Phosphorylation of the N-terminal regulatory domain activates the methylesterase activity.

The protein resides in the cytoplasm. It catalyses the reaction [protein]-L-glutamate 5-O-methyl ester + H2O = L-glutamyl-[protein] + methanol + H(+). It carries out the reaction L-glutaminyl-[protein] + H2O = L-glutamyl-[protein] + NH4(+). Its function is as follows. Involved in chemotaxis. Part of a chemotaxis signal transduction system that modulates chemotaxis in response to various stimuli. Catalyzes the demethylation of specific methylglutamate residues introduced into the chemoreceptors (methyl-accepting chemotaxis proteins or MCP) by CheR. Also mediates the irreversible deamidation of specific glutamine residues to glutamic acid. This Salmonella paratyphi A (strain ATCC 9150 / SARB42) protein is Protein-glutamate methylesterase/protein-glutamine glutaminase.